A 290-amino-acid polypeptide reads, in one-letter code: 33 kDa chaperonin (290 aa).

2 disulfides stabilise this stretch: Cys235/Cys237 and Cys268/Cys271.

It belongs to the HSP33 family. In terms of processing, under oxidizing conditions two disulfide bonds are formed involving the reactive cysteines. Under reducing conditions zinc is bound to the reactive cysteines and the protein is inactive.

It is found in the cytoplasm. Its function is as follows. Redox regulated molecular chaperone. Protects both thermally unfolding and oxidatively damaged proteins from irreversible aggregation. Plays an important role in the bacterial defense system toward oxidative stress. The chain is 33 kDa chaperonin from Streptococcus pyogenes serotype M49 (strain NZ131).